Reading from the N-terminus, the 510-residue chain is ATP synthase subunit alpha (510 aa).

170–177 (GDRQTGKT) contacts ATP.

It belongs to the ATPase alpha/beta chains family. In terms of assembly, F-type ATPases have 2 components, CF(1) - the catalytic core - and CF(0) - the membrane proton channel. CF(1) has five subunits: alpha(3), beta(3), gamma(1), delta(1), epsilon(1). CF(0) has three main subunits: a(1), b(2) and c(9-12). The alpha and beta chains form an alternating ring which encloses part of the gamma chain. CF(1) is attached to CF(0) by a central stalk formed by the gamma and epsilon chains, while a peripheral stalk is formed by the delta and b chains.

The protein localises to the cell inner membrane. The enzyme catalyses ATP + H2O + 4 H(+)(in) = ADP + phosphate + 5 H(+)(out). Its function is as follows. Produces ATP from ADP in the presence of a proton gradient across the membrane. The alpha chain is a regulatory subunit. This chain is ATP synthase subunit alpha, found in Caulobacter vibrioides (strain ATCC 19089 / CIP 103742 / CB 15) (Caulobacter crescentus).